The primary structure comprises 558 residues: Dihydroxy-acid dehydratase (558 aa).

Position 81 (Asp-81) interacts with Mg(2+). Cys-122 is a [2Fe-2S] cluster binding site. Asp-123 and Lys-124 together coordinate Mg(2+). Lys-124 carries the N6-carboxylysine modification. Cys-195 serves as a coordination point for [2Fe-2S] cluster. Glu-447 contacts Mg(2+). Catalysis depends on Ser-473, which acts as the Proton acceptor.

It belongs to the IlvD/Edd family. As to quaternary structure, homodimer. The cofactor is [2Fe-2S] cluster. Requires Mg(2+) as cofactor.

It catalyses the reaction (2R)-2,3-dihydroxy-3-methylbutanoate = 3-methyl-2-oxobutanoate + H2O. It carries out the reaction (2R,3R)-2,3-dihydroxy-3-methylpentanoate = (S)-3-methyl-2-oxopentanoate + H2O. Its pathway is amino-acid biosynthesis; L-isoleucine biosynthesis; L-isoleucine from 2-oxobutanoate: step 3/4. The protein operates within amino-acid biosynthesis; L-valine biosynthesis; L-valine from pyruvate: step 3/4. In terms of biological role, functions in the biosynthesis of branched-chain amino acids. Catalyzes the dehydration of (2R,3R)-2,3-dihydroxy-3-methylpentanoate (2,3-dihydroxy-3-methylvalerate) into 2-oxo-3-methylpentanoate (2-oxo-3-methylvalerate) and of (2R)-2,3-dihydroxy-3-methylbutanoate (2,3-dihydroxyisovalerate) into 2-oxo-3-methylbutanoate (2-oxoisovalerate), the penultimate precursor to L-isoleucine and L-valine, respectively. This Bacillus subtilis (strain 168) protein is Dihydroxy-acid dehydratase.